Consider the following 93-residue polypeptide: uncharacterized protein (93 aa).

The chain crosses the membrane as a helical span at residues 68–88 (WLVTVVLANGVVSLFLLGGLI).

The protein localises to the membrane. This is an uncharacterized protein from Mycoplasma pneumoniae (strain ATCC 29342 / M129 / Subtype 1) (Mycoplasmoides pneumoniae).